The primary structure comprises 72 residues: Cytochrome c oxidase subunit 2 (72 aa).

Residues 1-14 (MAHPSQLGFQDAAS) are Mitochondrial intermembrane-facing. The helical transmembrane segment at 15 to 45 (PVMEELLHFHDHALMIVFLISTLVLYIIVAM) threads the bilayer. Over 46-72 (VSTKLTNKYXLDSQEIEVIWTXLPAVI) the chain is Mitochondrial matrix.

This sequence belongs to the cytochrome c oxidase subunit 2 family. In terms of assembly, component of the cytochrome c oxidase (complex IV, CIV), a multisubunit enzyme composed of 14 subunits. The complex is composed of a catalytic core of 3 subunits MT-CO1, MT-CO2 and MT-CO3, encoded in the mitochondrial DNA, and 11 supernumerary subunits COX4I, COX5A, COX5B, COX6A, COX6B, COX6C, COX7A, COX7B, COX7C, COX8 and NDUFA4, which are encoded in the nuclear genome. The complex exists as a monomer or a dimer and forms supercomplexes (SCs) in the inner mitochondrial membrane with NADH-ubiquinone oxidoreductase (complex I, CI) and ubiquinol-cytochrome c oxidoreductase (cytochrome b-c1 complex, complex III, CIII), resulting in different assemblies (supercomplex SCI(1)III(2)IV(1) and megacomplex MCI(2)III(2)IV(2)). Found in a complex with TMEM177, COA6, COX18, COX20, SCO1 and SCO2. Interacts with TMEM177 in a COX20-dependent manner. Interacts with COX20. Interacts with COX16. Requires Cu cation as cofactor.

It is found in the mitochondrion inner membrane. It carries out the reaction 4 Fe(II)-[cytochrome c] + O2 + 8 H(+)(in) = 4 Fe(III)-[cytochrome c] + 2 H2O + 4 H(+)(out). Functionally, component of the cytochrome c oxidase, the last enzyme in the mitochondrial electron transport chain which drives oxidative phosphorylation. The respiratory chain contains 3 multisubunit complexes succinate dehydrogenase (complex II, CII), ubiquinol-cytochrome c oxidoreductase (cytochrome b-c1 complex, complex III, CIII) and cytochrome c oxidase (complex IV, CIV), that cooperate to transfer electrons derived from NADH and succinate to molecular oxygen, creating an electrochemical gradient over the inner membrane that drives transmembrane transport and the ATP synthase. Cytochrome c oxidase is the component of the respiratory chain that catalyzes the reduction of oxygen to water. Electrons originating from reduced cytochrome c in the intermembrane space (IMS) are transferred via the dinuclear copper A center (CU(A)) of subunit 2 and heme A of subunit 1 to the active site in subunit 1, a binuclear center (BNC) formed by heme A3 and copper B (CU(B)). The BNC reduces molecular oxygen to 2 water molecules using 4 electrons from cytochrome c in the IMS and 4 protons from the mitochondrial matrix. The protein is Cytochrome c oxidase subunit 2 (mt-co2) of Gomphosus varius (Bird wrasse).